The sequence spans 350 residues: Nicotinate-nucleotide--dimethylbenzimidazole phosphoribosyltransferase (350 aa).

E317 functions as the Proton acceptor in the catalytic mechanism.

This sequence belongs to the CobT family.

The catalysed reaction is 5,6-dimethylbenzimidazole + nicotinate beta-D-ribonucleotide = alpha-ribazole 5'-phosphate + nicotinate + H(+). Its pathway is nucleoside biosynthesis; alpha-ribazole biosynthesis; alpha-ribazole from 5,6-dimethylbenzimidazole: step 1/2. Catalyzes the synthesis of alpha-ribazole-5'-phosphate from nicotinate mononucleotide (NAMN) and 5,6-dimethylbenzimidazole (DMB). This chain is Nicotinate-nucleotide--dimethylbenzimidazole phosphoribosyltransferase, found in Shewanella oneidensis (strain ATCC 700550 / JCM 31522 / CIP 106686 / LMG 19005 / NCIMB 14063 / MR-1).